A 275-amino-acid polypeptide reads, in one-letter code: Exosome complex component Rrp42 (275 aa).

Belongs to the RNase PH family. Rrp42 subfamily. As to quaternary structure, component of the archaeal exosome complex. Forms a hexameric ring-like arrangement composed of 3 Rrp41-Rrp42 heterodimers. The hexameric ring associates with a trimer of Rrp4 and/or Csl4 subunits.

It localises to the cytoplasm. Its function is as follows. Non-catalytic component of the exosome, which is a complex involved in RNA degradation. Contributes to the structuring of the Rrp41 active site. The chain is Exosome complex component Rrp42 from Sulfurisphaera tokodaii (strain DSM 16993 / JCM 10545 / NBRC 100140 / 7) (Sulfolobus tokodaii).